Reading from the N-terminus, the 294-residue chain is 4-hydroxy-tetrahydrodipicolinate synthase (294 aa).

Threonine 45 contributes to the pyruvate binding site. Tyrosine 133 acts as the Proton donor/acceptor in catalysis. Lysine 162 functions as the Schiff-base intermediate with substrate in the catalytic mechanism. Isoleucine 204 provides a ligand contact to pyruvate.

Belongs to the DapA family. In terms of assembly, homotetramer; dimer of dimers.

The protein localises to the cytoplasm. It catalyses the reaction L-aspartate 4-semialdehyde + pyruvate = (2S,4S)-4-hydroxy-2,3,4,5-tetrahydrodipicolinate + H2O + H(+). Its pathway is amino-acid biosynthesis; L-lysine biosynthesis via DAP pathway; (S)-tetrahydrodipicolinate from L-aspartate: step 3/4. Catalyzes the condensation of (S)-aspartate-beta-semialdehyde [(S)-ASA] and pyruvate to 4-hydroxy-tetrahydrodipicolinate (HTPA). This is 4-hydroxy-tetrahydrodipicolinate synthase from Rhizobium meliloti (strain 1021) (Ensifer meliloti).